The following is a 90-amino-acid chain: uncharacterized protein (90 aa).

Helical transmembrane passes span 23 to 43 and 48 to 68; these read ITTI…VGLF and VTLL…IIGF.

The protein resides in the cell membrane. This is an uncharacterized protein from Rickettsia prowazekii (strain Madrid E).